The primary structure comprises 412 residues: MGNCFGFSAKVGNRESPYRGSSRISAKRSQSSRLSSLTIQSSSYNDDTSVASLQTPRSEGELLASPTLKAFTFNELKTATRNFRPDSVIGEGGFGYVYKGWIDERTLSPSKPGSGMVVAVKKLKEEGFQGHRQWLAEVDCLGRLHHMNLVKLIGYCSKGDHIRLLVYEYMPKGSLENHLFRRGAEPIPWRTRIKVAIGAARGLAFLHEAQVIYRDFKASNILLDSEFNAKLSDFGLAKVGPTGDRTHVSTQVMGTQGYAAPEYVATGRITAKSDVYSFGVVLLELLSGRLTVDKTKVGVERNLVDWAIPYLGDKRKVFRIMDTKLGGQYPHKGACLTANTALQCLNQEPKLRPKMSDVLSTLEELEMTLKSGSISNSVMKLTSSSSSFTAKQRVRTPVADPVLSSRRCRRVR.

Residue glycine 2 is the site of N-myristoyl glycine attachment. Cysteine 4 carries S-palmitoyl cysteine lipidation. The disordered stretch occupies residues 14–40; sequence RESPYRGSSRISAKRSQSSRLSSLTIQ. Positions 21-40 are enriched in low complexity; sequence SSRISAKRSQSSRLSSLTIQ. Position 72 is a phosphothreonine (threonine 72). Residues 83–369 enclose the Protein kinase domain; that stretch reads FRPDSVIGEG…STLEELEMTL (287 aa). Residues 89–97 and lysine 121 contribute to the ATP site; that span reads IGEGGFGYV. Position 167 is a phosphotyrosine (tyrosine 167). The active-site Proton acceptor is aspartate 215. Residues serine 219 and serine 249 each carry the phosphoserine modification. Phosphothreonine occurs at positions 250 and 255. Tyrosine 263 bears the Phosphotyrosine mark.

It belongs to the protein kinase superfamily. Ser/Thr protein kinase family.

Its subcellular location is the cell membrane. It catalyses the reaction L-seryl-[protein] + ATP = O-phospho-L-seryl-[protein] + ADP + H(+). The enzyme catalyses L-threonyl-[protein] + ATP = O-phospho-L-threonyl-[protein] + ADP + H(+). May be involved in plant defense signaling. The polypeptide is Probable serine/threonine-protein kinase PBL4 (Arabidopsis thaliana (Mouse-ear cress)).